We begin with the raw amino-acid sequence, 507 residues long: Cytochrome P450 monooxygenase cloA (507 aa).

A helical transmembrane segment spans residues 15–35; the sequence is WTWILLTTCIALISPLVLKGI. Asn247 carries N-linked (GlcNAc...) asparagine glycosylation. Heme is bound at residue Cys450.

The protein belongs to the cytochrome P450 family. Heme is required as a cofactor.

The protein localises to the membrane. It functions in the pathway alkaloid biosynthesis; ergot alkaloid biosynthesis. In terms of biological role, cytochrome P450 monooxygenase; part of the gene cluster that mediates the biosynthesis of fungal ergot alkaloid. DmaW catalyzes the first step of ergot alkaloid biosynthesis by condensing dimethylallyl diphosphate (DMAP) and tryptophan to form 4-dimethylallyl-L-tryptophan. The second step is catalyzed by the methyltransferase easF that methylates 4-dimethylallyl-L-tryptophan in the presence of S-adenosyl-L-methionine, resulting in the formation of 4-dimethylallyl-L-abrine. The catalase easC and the FAD-dependent oxidoreductase easE then transform 4-dimethylallyl-L-abrine to chanoclavine-I which is further oxidized by easD in the presence of NAD(+), resulting in the formation of chanoclavine-I aldehyde. Agroclavine dehydrogenase easG then mediates the conversion of chanoclavine-I aldehyde to agroclavine via a non-enzymatic adduct reaction: the substrate is an iminium intermediate that is formed spontaneously from chanoclavine-I aldehyde in the presence of glutathione. The presence of easA is not required to complete this reaction. Further conversion of agroclavine to paspalic acid is a two-step process involving oxidation of agroclavine to elymoclavine and of elymoclavine to paspalic acid, the second step being performed by the elymoclavine oxidase cloA. Paspalic acid is then further converted to D-lysergic acid. Ergopeptines are assembled from D-lysergic acid and three different amino acids by the D-lysergyl-peptide-synthetases composed each of a monomudular and a trimodular nonribosomal peptide synthetase subunit. LpsB and lpsC encode the monomodular subunits responsible for D-lysergic acid activation and incorporation into the ergopeptine backbone. LpsA1 and A2 subunits encode the trimodular nonribosomal peptide synthetase assembling the tripeptide portion of ergopeptines. LpsA1 is responsible for formation of the major ergopeptine, ergotamine, and lpsA2 for alpha-ergocryptine, the minor ergopeptine of the total alkaloid mixture elaborated by C.purpurea. D-lysergyl-tripeptides are assembled by the nonribosomal peptide synthetases and released as N-(D-lysergyl-aminoacyl)-lactams. Cyclolization of the D-lysergyl-tripeptides is performed by the Fe(2+)/2-ketoglutarate-dependent dioxygenase easH which introduces a hydroxyl group into N-(D-lysergyl-aminoacyl)-lactam at alpha-C of the aminoacyl residue followed by spontaneous condensation with the terminal lactam carbonyl group. The protein is Cytochrome P450 monooxygenase cloA of Claviceps purpurea (strain 20.1) (Ergot fungus).